Reading from the N-terminus, the 187-residue chain is Transmembrane protein 272 (187 aa).

4 helical membrane-spanning segments follow: residues 21–41 (CFVV…FIGM), 52–72 (LIPL…SLLL), 107–127 (IHLL…YWVF), and 149–169 (LYLF…LLLL).

It is found in the membrane. This is Transmembrane protein 272 from Homo sapiens (Human).